We begin with the raw amino-acid sequence, 34 residues long: Photosystem II reaction center protein Psb30 (34 aa).

The helical transmembrane segment at Val6 to Leu26 threads the bilayer.

This sequence belongs to the Psb30/Ycf12 family. In terms of assembly, PSII is composed of 1 copy each of membrane proteins PsbA, PsbB, PsbC, PsbD, PsbE, PsbF, PsbH, PsbI, PsbJ, PsbK, PsbL, PsbM, PsbT, PsbX, PsbY, PsbZ, Psb30/Ycf12, peripheral proteins of the oxygen-evolving complex and a large number of cofactors. It forms dimeric complexes.

It localises to the plastid. The protein resides in the chloroplast thylakoid membrane. Functionally, a core subunit of photosystem II (PSII), probably helps stabilize the reaction center. The protein is Photosystem II reaction center protein Psb30 of Pyropia yezoensis (Susabi-nori).